A 180-amino-acid polypeptide reads, in one-letter code: Type IV major pilin protein PilE1 (180 aa).

Positions 1–7 are excised as a propeptide; the sequence is MNTLQKG. Phenylalanine 8 carries the post-translational modification N-methylphenylalanine. Residues 8–28 form a helical membrane-spanning segment; the sequence is FTLIELMIVIAIVGILAAVAL. Serine 70 is a glycosylation site (O-linked (GlcNAc...) serine). Cysteine 128 and cysteine 160 are joined by a disulfide.

Belongs to the N-Me-Phe pilin family. As to quaternary structure, the pili are polar flexible filaments of about 5.4 nanometers diameter and 2.5 micrometers average length; they consist of only a single polypeptide chain arranged in a helical configuration of five subunits per turn in the assembled pilus.

The protein localises to the fimbrium. The protein resides in the membrane. In terms of biological role, major component of the type IV pilus (T4P) that plays a role in cellular adherence, microcolony formation, resistance to neutrophil mediated killing, twitching motility as well as transformation. Mediates the attachment and the formation of bacterial microcolonies on host epithelial cells. Mechanistically, pili retractation induces host NF-kappa-B activation in infected cells, which is temporally associated with the formation of gonococcal microcolonies. The polypeptide is Type IV major pilin protein PilE1 (pilE1) (Neisseria gonorrhoeae).